We begin with the raw amino-acid sequence, 356 residues long: Terpene synthase 10 (356 aa).

The short motif at 90 to 95 (DDYLDS) is the DDxx(x)D/E motif element. Residues 232-240 (NDAVSYAKE) carry the NDxxSxxxD/E motif motif.

This sequence belongs to the terpene synthase family.

The enzyme catalyses geranylgeranyl diphosphate = beta-araneosene + diphosphate. Functionally, terpene synthase that converts its substrate farnesyl diphosphate (FPP) into several unidentified sesquiterpenes. TPS10 also converts geranylgeranyl diphosphate (GGPP) into the diterpene beta-araneosene. The sequence is that of Terpene synthase 10 from Dictyostelium purpureum (Slime mold).